Consider the following 409-residue polypeptide: Bone morphogenetic protein 4 (409 aa).

Positions 1 to 19 are cleaved as a signal peptide; the sequence is MIPGNRMLMVVLLCQVLLG. Positions 20-293 are excised as a propeptide; it reads GASHASLIPE…ALTRRRRAKR (274 aa). Ser-91 carries the post-translational modification Phosphoserine. The tract at residues 91–110 is disordered; the sequence is SGEEEEEEQMPSGGLEYPER. Residues Asn-144, Asn-209, Asn-351, and Asn-366 are each glycosylated (N-linked (GlcNAc...) asparagine). Disulfide bonds link Cys-309-Cys-374, Cys-338-Cys-406, and Cys-342-Cys-408.

This sequence belongs to the TGF-beta family. In terms of assembly, homodimer; disulfide-linked. Interacts with GREM2. Part of a complex consisting of TWSG1 and CHRD. Interacts with the serine proteases, HTRA1 and HTRA3; the interaction with either inhibits BMP4-mediated signaling. The HTRA protease activity is required for this inhibition. Interacts with SOSTDC1. Interacts with FBN1 (via N-terminal domain) and FBN2. Interacts with type I receptor BMPR1A. Interacts with type II receptor BMPR2. Interacts with FSTL1; this interaction inhibits the activation of the BMP4/Smad1/5/8 signaling pathway. Interacts with SCUBE3. Interacts with TGFBR3.

The protein localises to the secreted. It is found in the extracellular space. It localises to the extracellular matrix. Growth factor of the TGF-beta superfamily that plays essential roles in many developmental processes, including neurogenesis, vascular development, angiogenesis and osteogenesis. Acts in concert with PTHLH/PTHRP to stimulate ductal outgrowth during embryonic mammary development and to inhibit hair follicle induction. Initiates the canonical BMP signaling cascade by associating with type I receptor BMPR1A and type II receptor BMPR2. Once all three components are bound together in a complex at the cell surface, BMPR2 phosphorylates and activates BMPR1A. In turn, BMPR1A propagates signal by phosphorylating SMAD1/5/8 that travel to the nucleus and act as activators and repressors of transcription of target genes. Positively regulates the expression of odontogenic development regulator MSX1 via inducing the IPO7-mediated import of SMAD1 to the nucleus. Required for MSX1-mediated mesenchymal molar tooth bud development beyond the bud stage, via promoting Wnt signaling. Acts as a positive regulator of odontoblast differentiation during mesenchymal tooth germ formation, expression is repressed during the bell stage by MSX1-mediated inhibition of CTNNB1 signaling. Able to induce its own expression in dental mesenchymal cells and also in the neighboring dental epithelial cells via an MSX1-mediated pathway. Can also signal through non-canonical BMP pathways such as ERK/MAP kinase, PI3K/Akt, or SRC cascades. For example, induces SRC phosphorylation which, in turn, activates VEGFR2, leading to an angiogenic response. This Oryctolagus cuniculus (Rabbit) protein is Bone morphogenetic protein 4 (BMP4).